The following is a 221-amino-acid chain: Hypoxanthine-guanine phosphoribosyltransferase (221 aa).

Ser2 bears the N-acetylserine mark. GMP-binding positions include Lys85, Asp110–Thr118, Lys159, and Trp188–Glu194. Catalysis depends on Asp114, which acts as the Proton acceptor.

Belongs to the purine/pyrimidine phosphoribosyltransferase family. In terms of assembly, dimer. It depends on Mg(2+) as a cofactor.

It localises to the cytoplasm. Its subcellular location is the nucleus. The catalysed reaction is IMP + diphosphate = hypoxanthine + 5-phospho-alpha-D-ribose 1-diphosphate. The enzyme catalyses GMP + diphosphate = guanine + 5-phospho-alpha-D-ribose 1-diphosphate. Its pathway is purine metabolism; IMP biosynthesis via salvage pathway; IMP from hypoxanthine: step 1/1. Its activity is regulated as follows. Subject to feedback inhibition by GMP. In terms of biological role, converts guanine to guanosine monophosphate, and hypoxanthine to inosine monophosphate. Transfers the 5-phosphoribosyl group from 5-phosphoribosylpyrophosphate onto the purine. Plays a central role in the generation of purine nucleotides through the purine salvage pathway. The polypeptide is Hypoxanthine-guanine phosphoribosyltransferase (HPT1) (Saccharomyces cerevisiae (strain ATCC 204508 / S288c) (Baker's yeast)).